Here is a 244-residue protein sequence, read N- to C-terminus: Small ribosomal subunit protein uS2 (244 aa).

It belongs to the universal ribosomal protein uS2 family.

This Halalkalibacterium halodurans (strain ATCC BAA-125 / DSM 18197 / FERM 7344 / JCM 9153 / C-125) (Bacillus halodurans) protein is Small ribosomal subunit protein uS2.